The primary structure comprises 279 residues: Thymidylate synthase (279 aa).

133–134 contributes to the dUMP binding site; the sequence is RR. Catalysis depends on Cys-154, which acts as the Nucleophile. Residues 178–181, Asn-189, and 219–221 each bind dUMP; these read RSND and HIY. Residue Asp-181 participates in (6R)-5,10-methylene-5,6,7,8-tetrahydrofolate binding. Position 278 (Ala-278) interacts with (6R)-5,10-methylene-5,6,7,8-tetrahydrofolate.

This sequence belongs to the thymidylate synthase family. Bacterial-type ThyA subfamily. Homodimer.

It localises to the cytoplasm. The catalysed reaction is dUMP + (6R)-5,10-methylene-5,6,7,8-tetrahydrofolate = 7,8-dihydrofolate + dTMP. Its pathway is pyrimidine metabolism; dTTP biosynthesis. Its function is as follows. Catalyzes the reductive methylation of 2'-deoxyuridine-5'-monophosphate (dUMP) to 2'-deoxythymidine-5'-monophosphate (dTMP) while utilizing 5,10-methylenetetrahydrofolate (mTHF) as the methyl donor and reductant in the reaction, yielding dihydrofolate (DHF) as a by-product. This enzymatic reaction provides an intracellular de novo source of dTMP, an essential precursor for DNA biosynthesis. The chain is Thymidylate synthase from Streptococcus agalactiae serotype Ia (strain ATCC 27591 / A909 / CDC SS700).